We begin with the raw amino-acid sequence, 374 residues long: uncharacterized protein (374 aa).

The interval 1 to 46 is disordered; the sequence is MVNEEEKDLTAEGDSNNTGVSPDSIKNKTLDFYPKEKTTERKTRSR. The span at 25 to 46 shows a compositional bias: basic and acidic residues; the sequence is IKNKTLDFYPKEKTTERKTRSR. The next 6 membrane-spanning stretches (helical) occupy residues 70 to 90, 127 to 147, 153 to 173, 199 to 219, 242 to 262, and 312 to 332; these read YAYIIFAAFLGMASYDYFIAA, WVFYFVFNIPLFIFGVIKIGI, TIVYIGLQNGFHFAFAYIPVI, IWLFVFAAVAGILNGIAYGLV, ISIANYNRIVNYIIIVVMLAI, and YFFGPALFASYLFVVVQAITI.

The protein to M.genitalium MG432 and MG443.

It is found in the cell membrane. This is an uncharacterized protein from Spiroplasma citri.